Reading from the N-terminus, the 1461-residue chain is DNA topoisomerase 2 (1461 aa).

Over residues 1–17 (MSESESDYFTDGSEDDF) the composition is skewed to acidic residues. The disordered stretch occupies residues 1-61 (MSESESDYFT…TPKPTNASET (61 aa)). Positions 41–52 (TNSTVSSSRSST) are enriched in low complexity. Residues N120, N149, 177–179 (SSN), and 190–197 (GRNGFGAK) contribute to the ATP site. Residues 382–389 (SKKEKGKK) are interaction with DNA. Residue 418–420 (QTK) coordinates ATP. A Toprim domain is found at 498 to 614 (CTLILTEGLS…GLLDIPGFLL (117 aa)). 3 residues coordinate Mg(2+): E504, D583, and D585. A Topo IIA-type catalytic domain is found at 752-1226 (IPSVLDGFKP…SAKDLWNQDL (475 aa)). Residue Y842 is the O-(5'-phospho-DNA)-tyrosine intermediate of the active site. The tract at residues 1024-1033 (KLVSSLSLAN) is interaction with DNA. Disordered stretches follow at residues 1122 to 1155 (DGKP…DVGN) and 1244 to 1461 (RESL…IVDE). The segment covering 1133–1153 (LTGDDADEEEETQEQEGDEDV) has biased composition (acidic residues). The span at 1251 to 1261 (GKKKSTKRRAK) shows a compositional bias: basic residues. 2 stretches are compositionally biased toward basic and acidic residues: residues 1274–1283 (VKVEPKEKKS) and 1406–1417 (DKPEPKERRTRE). A compositionally biased stretch (acidic residues) spans 1434–1461 (DSDDEDEDEEDDIVMSDGDDDDDFIVDE).

Belongs to the type II topoisomerase family. In terms of assembly, homodimer. It depends on Mg(2+) as a cofactor. The cofactor is Mn(2+). Ca(2+) is required as a cofactor.

Its subcellular location is the nucleus. It catalyses the reaction ATP-dependent breakage, passage and rejoining of double-stranded DNA.. Its function is as follows. Control of topological states of DNA by transient breakage and subsequent rejoining of DNA strands. Topoisomerase II makes double-strand breaks. This is DNA topoisomerase 2 (TOP2) from Candida albicans (Yeast).